A 313-amino-acid chain; its full sequence is Olfactory receptor 4E2 (313 aa).

Over 1-25 the chain is Extracellular; it reads MDSLNQTRVTEFVFLGLTDNRVLEM. An N-linked (GlcNAc...) asparagine glycan is attached at Asn5. Residues 26-49 form a helical membrane-spanning segment; sequence LFFMAFSAIYMLTLSGNILIIIAT. The Cytoplasmic portion of the chain corresponds to 50–57; it reads VFTPSLHT. Residues 58–79 traverse the membrane as a helical segment; that stretch reads PMYFFLSNLSFIDICHSSVTVP. Residues 80–100 are Extracellular-facing; that stretch reads KMLEGLLLERKTISFDNCITQ. Cys97 and Cys179 are oxidised to a cystine. Residues 101 to 120 form a helical membrane-spanning segment; the sequence is LFFLHLFACAEIFLLIIVAY. Residues His105 and Cys109 each contribute to the Cu cation site. The Cytoplasmic portion of the chain corresponds to 121–139; sequence DRYVAICTPLHYPNVMNMR. Residues 140 to 158 traverse the membrane as a helical segment; the sequence is VCIQLVFALWLGGTVHSLG. At 159-195 the chain is on the extracellular side; the sequence is QTFLTIRLPYCGPNIIDSYFCDVPLVIKLACTDTYLT. The chain crosses the membrane as a helical span at residues 196 to 219; that stretch reads GILIVTNSGTISLSCFLAVVTSYM. Residues 220 to 235 are Cytoplasmic-facing; the sequence is VILVSLRKHSAEGRQK. Residues 236-258 form a helical membrane-spanning segment; it reads ALSTCSAHFMVVALFFGPCIFIY. Topologically, residues 259-269 are extracellular; sequence TRPDTSFSIDK. Residue Arg260 participates in Cu cation binding. The chain crosses the membrane as a helical span at residues 270-289; sequence VVSVFYTVVTPLLNPFIYTL. Residues 290–313 are Cytoplasmic-facing; sequence RNEEVKSAMKQLRQRQVFFTKSYT.

Belongs to the G-protein coupled receptor 1 family.

It is found in the cell membrane. Copper binding enhances receptor activity in response to odorant binding. Functionally, olfactory receptor that is activated by the binding of organosulfur odorants with thioether groups such as (methylthio)methanethiol (MTMT) and bis(methylthiomethyl) disulfide. Also binds odorants cis-cyclooctene and tert-butyl mercaptan. The activity of this receptor is mediated by G proteins which activate adenylyl cyclase. The sequence is that of Olfactory receptor 4E2 from Homo sapiens (Human).